Reading from the N-terminus, the 511-residue chain is Probable Xaa-Pro aminopeptidase MAA_08947 (511 aa).

Mn(2+)-binding residues include Asp-275, Asp-286, Glu-439, and Glu-480.

This sequence belongs to the peptidase M24B family. It depends on Mn(2+) as a cofactor.

It carries out the reaction Release of any N-terminal amino acid, including proline, that is linked to proline, even from a dipeptide or tripeptide.. Functionally, catalyzes the removal of a penultimate prolyl residue from the N-termini of peptides. The chain is Probable Xaa-Pro aminopeptidase MAA_08947 from Metarhizium robertsii (strain ARSEF 23 / ATCC MYA-3075) (Metarhizium anisopliae (strain ARSEF 23)).